The primary structure comprises 178 residues: ATP-dependent protease subunit HslV (178 aa).

Threonine 5 is a catalytic residue. 3 residues coordinate Na(+): serine 161, cysteine 164, and threonine 167.

The protein belongs to the peptidase T1B family. HslV subfamily. In terms of assembly, a double ring-shaped homohexamer of HslV is capped on each side by a ring-shaped HslU homohexamer. The assembly of the HslU/HslV complex is dependent on binding of ATP.

The protein resides in the cytoplasm. The enzyme catalyses ATP-dependent cleavage of peptide bonds with broad specificity.. Its activity is regulated as follows. Allosterically activated by HslU binding. In terms of biological role, protease subunit of a proteasome-like degradation complex believed to be a general protein degrading machinery. This chain is ATP-dependent protease subunit HslV, found in Syntrophomonas wolfei subsp. wolfei (strain DSM 2245B / Goettingen).